Here is a 105-residue protein sequence, read N- to C-terminus: Cuticle protein AMP4 (105 aa).

The segment at 1–21 (DRDAQTLTDERNDQGDGNFRY) is disordered. One can recognise a Chitin-binding type R&amp;R domain in the interval 16–81 (DGNFRYEFET…PSSDLLPVGP (66 aa)).

In terms of tissue distribution, arthrodial membrane.

In Homarus americanus (American lobster), this protein is Cuticle protein AMP4.